The following is a 461-amino-acid chain: Cyclic 2,3-diphosphoglycerate synthetase (461 aa).

Belongs to the cyclic 2,3-diphosphoglycerate synthetase family.

The protein localises to the cytoplasm. It catalyses the reaction (2R)-2,3-bisphosphoglycerate + ATP + H(+) = cyclic (2R)-2,3-bisphosphoglycerate + ADP + phosphate. Catalyzes the formation of cyclic 2,3-diphosphoglycerate (cDPG) by formation of an intramolecular phosphoanhydride bond at the expense of ATP. The polypeptide is Cyclic 2,3-diphosphoglycerate synthetase (Methanosphaera stadtmanae (strain ATCC 43021 / DSM 3091 / JCM 11832 / MCB-3)).